Here is a 578-residue protein sequence, read N- to C-terminus: ATP-dependent RNA helicase has-1 (578 aa).

Residues 1–91 (MASEFSKKRK…KDAEAGDELT (91 aa)) are disordered. Residues 13-26 (DAKIATEDGAATDK) show a composition bias toward basic and acidic residues. The span at 27 to 36 (KTKKVKKDKK) shows a compositional bias: basic residues. 2 stretches are compositionally biased toward acidic residues: residues 43–54 (EVVEDATPEEEN) and 77–88 (EDSDDKDAEAGD). A Q motif motif is present at residues 107–135 (TDFSELNLSDKTMKAIAEMGFTKMTEIQR). Residues 138 to 313 (IPPLLAGKDV…RISLRPGPLY (176 aa)) enclose the Helicase ATP-binding domain. 151 to 158 (AKTGSGKT) contributes to the ATP binding site. The DEAD box motif lies at 260-263 (DEAD). The short motif at 339–355 (KRFLLLFSFLKKMQKKK) is the Bipartite nuclear localization signal element. A Helicase C-terminal domain is found at 343–497 (LLFSFLKKMQ…NVQSQLEKLI (155 aa)). Positions 556–578 (SMSRDKKQTSRRAYGSQPKQNRH) are disordered.

The protein belongs to the DEAD box helicase family. DDX18/HAS1 subfamily. As to quaternary structure, associates in the nucleolus with the 60S and pre-60S ribosomal subunits.

The protein localises to the nucleus. Its subcellular location is the nucleolus. It carries out the reaction ATP + H2O = ADP + phosphate + H(+). Its function is as follows. ATP-dependent RNA helicase involved in 40S ribosomal subunit biogenesis. Required for the processing and cleavage of 35S pre-rRNA at sites A0, A1, and A2, leading to mature 18S rRNA. The polypeptide is ATP-dependent RNA helicase has-1 (has-1) (Neurospora crassa (strain ATCC 24698 / 74-OR23-1A / CBS 708.71 / DSM 1257 / FGSC 987)).